The following is a 40-amino-acid chain: Photosystem II reaction center protein J (40 aa).

Residues 8–28 (IPLWLIGTVTGILVIGLIGVF) form a helical membrane-spanning segment.

The protein belongs to the PsbJ family. As to quaternary structure, PSII is composed of 1 copy each of membrane proteins PsbA, PsbB, PsbC, PsbD, PsbE, PsbF, PsbH, PsbI, PsbJ, PsbK, PsbL, PsbM, PsbT, PsbX, PsbY, PsbZ, Psb30/Ycf12, at least 3 peripheral proteins of the oxygen-evolving complex and a large number of cofactors. It forms dimeric complexes.

The protein resides in the plastid. The protein localises to the chloroplast thylakoid membrane. One of the components of the core complex of photosystem II (PSII). PSII is a light-driven water:plastoquinone oxidoreductase that uses light energy to abstract electrons from H(2)O, generating O(2) and a proton gradient subsequently used for ATP formation. It consists of a core antenna complex that captures photons, and an electron transfer chain that converts photonic excitation into a charge separation. The protein is Photosystem II reaction center protein J of Nymphaea alba (White water-lily).